We begin with the raw amino-acid sequence, 434 residues long: Nicotinate phosphoribosyltransferase (434 aa).

Histidine 242 is modified (phosphohistidine; by autocatalysis).

Belongs to the NAPRTase family. Transiently phosphorylated on a His residue during the reaction cycle. Phosphorylation strongly increases the affinity for substrates and increases the rate of nicotinate D-ribonucleotide production. Dephosphorylation regenerates the low-affinity form of the enzyme, leading to product release.

It carries out the reaction nicotinate + 5-phospho-alpha-D-ribose 1-diphosphate + ATP + H2O = nicotinate beta-D-ribonucleotide + ADP + phosphate + diphosphate. It functions in the pathway cofactor biosynthesis; NAD(+) biosynthesis; nicotinate D-ribonucleotide from nicotinate: step 1/1. Catalyzes the synthesis of beta-nicotinate D-ribonucleotide from nicotinate and 5-phospho-D-ribose 1-phosphate at the expense of ATP. This is Nicotinate phosphoribosyltransferase from Rhizobium rhizogenes (strain K84 / ATCC BAA-868) (Agrobacterium radiobacter).